The sequence spans 671 residues: cGMP-dependent protein kinase 1 (671 aa).

N-acetylserine is present on serine 2. The stretch at 2–59 (SELEEDFAKILMLKEERIKELEKRLSEKEEEIQELKRKLHKCQSVLPVPSTHIGPRTT) forms a coiled coil. The tract at residues 2-102 (SELEEDFAKI…LIKEAILDND (101 aa)) is required for dimerization. The tract at residues 9–44 (AKILMLKEERIKELEKRLSEKEEEIQELKRKLHKCQ) is leucine-zipper. Positions 50–75 (PSTHIGPRTTRAQGISAEPQTYRSFH) are autoinhibitory domain. At threonine 59 the chain carries Phosphothreonine; by autocatalysis. Positions 103-220 (FMKNLELSQI…EYMEFLKSVP (118 aa)) are cGMP-binding, high affinity. Residues 167-170 (GELA) and 177-178 (RT) contribute to the 3',5'-cyclic AMP site. Residues 167-170 (GELA), 177-178 (RT), arginine 282, 291-294 (GEKA), 301-302 (RT), and tyrosine 336 contribute to the 3',5'-cyclic GMP site. The cGMP-binding, low affinity stretch occupies residues 221–341 (TFQSLPEEIL…SNKAYEDAEA (121 aa)). In terms of domain architecture, Protein kinase spans 360–619 (FNIIDTLGVG…VKDIQKHKWF (260 aa)). ATP contacts are provided by residues 366 to 374 (LGVGGFGRV) and lysine 390. Aspartate 484 functions as the Proton acceptor in the catalytic mechanism. At threonine 515 the chain carries Phosphothreonine. Positions 620-671 (EGFNWEGLRKGTLTPPIIPSVASPTDTSNFDSFPEDNDEPPPDDNSGWDIDF) constitute an AGC-kinase C-terminal domain. The tract at residues 635 to 671 (PIIPSVASPTDTSNFDSFPEDNDEPPPDDNSGWDIDF) is disordered. The span at 652–661 (FPEDNDEPPP) shows a compositional bias: acidic residues.

Belongs to the protein kinase superfamily. AGC Ser/Thr protein kinase family. cGMP subfamily. As to quaternary structure, isoform alpha: parallel homodimer or heterodimer and also heterotetramer. Interacts directly with PPP1R12A. Non-covalent dimer of dimer of PRKG1-PRKG1 and PPP1R12A-PPP1R12A. This interaction targets PRKG1 to stress fibers to mediate smooth muscle cell relaxation and vasodilation in responses to rises in cGMP. Isoform beta: antiparallel homodimer. Part of cGMP kinase signaling complex at least composed of ACTA2/alpha-actin, CNN1/calponin H1, PLN/phospholamban, PRKG1 and ITPR1. Interacts with IRAG1. Forms a stable complex with ITPR1, IRAG1, and isoform beta of PRKG1. Interacts with TRPC7 (via ankyrin repeat domain). Isoform alpha interacts with RGS2. Interacts with GTF2I. In terms of processing, autophosphorylation increases kinase activity. Post-translationally, 65 kDa monomer is produced by proteolytic cleavage. In terms of tissue distribution, high concentrations are detected in various smooth muscle: lung, rumen, trachea, aorta, uterus and stomach. Isoform alpha is expressed predominantly in heart, cerebellum and lung, whereas the beta isoform is expressed in high concentrations in trachea, aorta, stomach and uterus.

The protein localises to the cytoplasm. The catalysed reaction is L-seryl-[protein] + ATP = O-phospho-L-seryl-[protein] + ADP + H(+). The enzyme catalyses L-threonyl-[protein] + ATP = O-phospho-L-threonyl-[protein] + ADP + H(+). With respect to regulation, in the absence of cGMP, PRKG1 activity is suppressed by autoinhibitory contacts. Functionally, serine/threonine protein kinase that acts as a key mediator of the nitric oxide (NO)/cGMP signaling pathway. GMP binding activates PRKG1, which phosphorylates serines and threonines on many cellular proteins. Numerous protein targets for PRKG1 phosphorylation are implicated in modulating cellular calcium, but the contribution of each of these targets may vary substantially among cell types. Proteins that are phosphorylated by PRKG1 regulate platelet activation and adhesion, smooth muscle contraction, cardiac function, gene expression, feedback of the NO-signaling pathway, and other processes involved in several aspects of the CNS like axon guidance, hippocampal and cerebellar learning, circadian rhythm and nociception. Smooth muscle relaxation is mediated through lowering of intracellular free calcium, by desensitization of contractile proteins to calcium, and by decrease in the contractile state of smooth muscle or in platelet activation. Regulates intracellular calcium levels via several pathways: phosphorylates IRAG1 and inhibits IP3-induced Ca(2+) release from intracellular stores, phosphorylation of KCNMA1 (BKCa) channels decreases intracellular Ca(2+) levels, which leads to increased opening of this channel. PRKG1 phosphorylates the canonical transient receptor potential channel (TRPC) family which inactivates the associated inward calcium current. Another mode of action of NO/cGMP/PKGI signaling involves PKGI-mediated inactivation of the Ras homolog gene family member A (RhoA). Phosphorylation of RHOA by PRKG1 blocks the action of this protein in myriad processes: regulation of RHOA translocation; decreasing contraction; controlling vesicle trafficking, reduction of myosin light chain phosphorylation resulting in vasorelaxation. Activation of PRKG1 by NO signaling also alters gene expression in a number of tissues. In smooth muscle cells, increased cGMP and PRKG1 activity influence expression of smooth muscle-specific contractile proteins, levels of proteins in the NO/cGMP signaling pathway, down-regulation of the matrix proteins osteopontin and thrombospondin-1 to limit smooth muscle cell migration and phenotype. Regulates vasodilator-stimulated phosphoprotein (VASP) functions in platelets and smooth muscle. This chain is cGMP-dependent protein kinase 1 (PRKG1), found in Bos taurus (Bovine).